The following is a 285-amino-acid chain: MRIVVITGMSGSGKSTAVRALEDEGFYCIDNLPVRLFRQFVELIEKSGESFKGVVLVTDIRGRDLSTGIVESFRELRSVGHELEVLFFDASDEVLIRRFAETRRRHPADEHCTVPEGIRIERERLAALRQNATLIIDTSEFNVHQLKEQVIRAIKGEQGSSNFTVEVVSFGFRYGVPLDASLVMDVRFLPNPHFVPALRPYSGQEPAVRQFVLEQPDTTAFLDHFFNLLQFLIPAYCREGKSYLTIAIGCTGGRHRSVAITEATAARLETLGLKVRISHRDIEKG.

An ATP-binding site is contributed by 8 to 15 (GMSGSGKS). Residue 59–62 (DIRG) participates in GTP binding.

This sequence belongs to the RapZ-like family.

In terms of biological role, displays ATPase and GTPase activities. The protein is Nucleotide-binding protein Glov_2163 of Trichlorobacter lovleyi (strain ATCC BAA-1151 / DSM 17278 / SZ) (Geobacter lovleyi).